The primary structure comprises 702 residues: Flagellar operon control protein UmoB (702 aa).

5 helical membrane-spanning segments follow: residues 4 to 24 (SVIILAIFMISLFIMAAFLFF), 204 to 224 (GFWNGSLICLGLILWLTALMM), 227 to 247 (VFLPWIMAAGGTFLVLGLFLI), 343 to 363 (IIFVVCSLFIIGMLYLYQPLS), and 656 to 676 (GNTLLLFFAIGFLILNLFFII).

The protein belongs to the IgaA family.

Its subcellular location is the cell inner membrane. In terms of biological role, up-regulator of flagellar flhDC master operon. In Proteus mirabilis, this protein is Flagellar operon control protein UmoB (umoB).